The primary structure comprises 251 residues: Copper transport protein CTR1 (251 aa).

A helical transmembrane segment spans residues A90–V110. The span at D157–K173 shows a compositional bias: basic and acidic residues. A disordered region spans residues D157–G176. Residues M208–V228 form a helical membrane-spanning segment.

In terms of assembly, oligomer.

Its subcellular location is the cell membrane. Functionally, required for high affinity copper (probably reduced Cu I) transport into the cell. The protein is Copper transport protein CTR1 (CTR1) of Candida albicans (strain SC5314 / ATCC MYA-2876) (Yeast).